The primary structure comprises 168 residues: Phosphopantetheine adenylyltransferase (168 aa).

Substrate is bound at residue T14. ATP contacts are provided by residues 14–15 (TF) and H22. K46, L78, and R92 together coordinate substrate. ATP contacts are provided by residues 93–95 (GLR), E103, and 128–134 (YSFISSS).

The protein belongs to the bacterial CoaD family. In terms of assembly, homohexamer. Requires Mg(2+) as cofactor.

Its subcellular location is the cytoplasm. It catalyses the reaction (R)-4'-phosphopantetheine + ATP + H(+) = 3'-dephospho-CoA + diphosphate. The protein operates within cofactor biosynthesis; coenzyme A biosynthesis; CoA from (R)-pantothenate: step 4/5. Its function is as follows. Reversibly transfers an adenylyl group from ATP to 4'-phosphopantetheine, yielding dephospho-CoA (dPCoA) and pyrophosphate. This chain is Phosphopantetheine adenylyltransferase, found in Xanthomonas axonopodis pv. citri (strain 306).